A 114-amino-acid chain; its full sequence is Chaperone protein YscY (114 aa).

In terms of assembly, binds to YscX.

The protein localises to the cytoplasm. Its function is as follows. Required for Yop secretion. Functions probably as a chaperone which stabilizes YscX within the cell, before its secretion. This chain is Chaperone protein YscY (yscY), found in Yersinia enterocolitica serotype O:8 / biotype 1B (strain NCTC 13174 / 8081).